The following is a 495-amino-acid chain: Cobyric acid synthase (495 aa).

A GATase cobBQ-type domain is found at 250–444 (SLKISILRLP…LHGLFDNGAW (195 aa)). The Nucleophile role is filled by Cys-331. His-436 is a catalytic residue.

It belongs to the CobB/CobQ family. CobQ subfamily.

The protein operates within cofactor biosynthesis; adenosylcobalamin biosynthesis. Catalyzes amidations at positions B, D, E, and G on adenosylcobyrinic A,C-diamide. NH(2) groups are provided by glutamine, and one molecule of ATP is hydrogenolyzed for each amidation. In Rippkaea orientalis (strain PCC 8801 / RF-1) (Cyanothece sp. (strain PCC 8801)), this protein is Cobyric acid synthase.